We begin with the raw amino-acid sequence, 307 residues long: Small ribosomal subunit biogenesis GTPase RsgA (307 aa).

Residues 1 to 20 (MPSEHPFSDGISTPNPKETM) are disordered. A compositionally biased stretch (polar residues) spans 10-20 (GISTPNPKETM). Residues 85–242 (RQDAWKTKLI…LIDSPGLQEF (158 aa)) form the CP-type G domain. Residues 135–138 (NKAD) and 184–192 (GQSGMGKST) contribute to the GTP site. The Zn(2+) site is built by Cys266, Cys271, His273, and Cys279.

Belongs to the TRAFAC class YlqF/YawG GTPase family. RsgA subfamily. As to quaternary structure, monomer. Associates with 30S ribosomal subunit, binds 16S rRNA. Zn(2+) serves as cofactor.

It is found in the cytoplasm. In terms of biological role, one of several proteins that assist in the late maturation steps of the functional core of the 30S ribosomal subunit. Helps release RbfA from mature subunits. May play a role in the assembly of ribosomal proteins into the subunit. Circularly permuted GTPase that catalyzes slow GTP hydrolysis, GTPase activity is stimulated by the 30S ribosomal subunit. This Neisseria meningitidis serogroup A / serotype 4A (strain DSM 15465 / Z2491) protein is Small ribosomal subunit biogenesis GTPase RsgA.